The primary structure comprises 547 residues: Chaperonin GroEL (547 aa).

ATP contacts are provided by residues 30–33, Lys-51, 87–91, Gly-415, and Asp-495; these read TLGP and DGTTT. The interval 526 to 547 is disordered; it reads KKDTPVPPMPGGGMGGMGGMDF. Residues 536–547 show a composition bias toward gly residues; that stretch reads GGGMGGMGGMDF.

It belongs to the chaperonin (HSP60) family. As to quaternary structure, forms a cylinder of 14 subunits composed of two heptameric rings stacked back-to-back. Interacts with the co-chaperonin GroES.

The protein localises to the cytoplasm. The catalysed reaction is ATP + H2O + a folded polypeptide = ADP + phosphate + an unfolded polypeptide.. Its function is as follows. Together with its co-chaperonin GroES, plays an essential role in assisting protein folding. The GroEL-GroES system forms a nano-cage that allows encapsulation of the non-native substrate proteins and provides a physical environment optimized to promote and accelerate protein folding. The protein is Chaperonin GroEL of Bartonella henselae (strain ATCC 49882 / DSM 28221 / CCUG 30454 / Houston 1) (Rochalimaea henselae).